We begin with the raw amino-acid sequence, 150 residues long: Avidin-related protein 4/5 (150 aa).

Positions 1 to 24 are cleaved as a signal peptide; it reads MVHTTSPLLLLLLLSLALVAPSLS. Positions 26-147 constitute an Avidin-like domain; sequence RKCSLTGKWT…GYNNFTRLCT (122 aa). A disulfide bridge connects residues Cys-28 and Cys-105. Positions 36, 40, 57, 59, and 63 each coordinate biotin. Asn-67 and Asn-93 each carry an N-linked (GlcNAc...) asparagine glycan. Biotin contacts are provided by Ser-95 and Asn-140. N-linked (GlcNAc...) asparagine glycosylation is present at Asn-141.

It belongs to the avidin/streptavidin family. In terms of assembly, homotetramer.

The protein localises to the secreted. Its function is as follows. Forms a strong non-covalent specific complex with biotin. This is Avidin-related protein 4/5 (AVR4) from Gallus gallus (Chicken).